The chain runs to 43 residues: Protein PsbN (43 aa).

The chain crosses the membrane as a helical span at residues 7–27 (VAIFISCLLVSFTGYALYTAF).

Belongs to the PsbN family.

The protein resides in the plastid. It localises to the chloroplast thylakoid membrane. Functionally, may play a role in photosystem I and II biogenesis. In Huperzia lucidula (Shining clubmoss), this protein is Protein PsbN.